The sequence spans 124 residues: MAEVKDQLEIKFRLNDGSDIGPKLFPDATTVATLKETVVAQWPRDKENGPKTVKDVKLISAGRILENNKTVGDCRSPVGNFSGAVTTMHVIIQHQVTEKEKKKKKPKGDLKQNKCVCLCFGARC.

A Ubiquitin-like domain is found at 8–74; that stretch reads LEIKFRLNDG…LENNKTVGDC (67 aa). Residues Cys115, Cys117, Cys119, and Cys124 are each lipidated (S-palmitoyl cysteine).

Post-translationally, acylated protein. Probably modified with palmitate. As to expression, ubiquitous, but three fold higher expression in stamens.

The protein resides in the cell membrane. In terms of biological role, may serve as docking site to facilitate the association of other proteins to the plasma membrane. The chain is Membrane-anchored ubiquitin-fold protein 2 (MUB2) from Arabidopsis thaliana (Mouse-ear cress).